Consider the following 315-residue polypeptide: Acetyl-coenzyme A carboxylase carboxyl transferase subunit alpha (315 aa).

The 254-residue stretch at 39-292 folds into the CoA carboxyltransferase C-terminal domain; it reads LEDKSAKLLR…GDALEQELNG (254 aa).

Belongs to the AccA family. In terms of assembly, acetyl-CoA carboxylase is a heterohexamer composed of biotin carboxyl carrier protein (AccB), biotin carboxylase (AccC) and two subunits each of ACCase subunit alpha (AccA) and ACCase subunit beta (AccD).

It localises to the cytoplasm. It catalyses the reaction N(6)-carboxybiotinyl-L-lysyl-[protein] + acetyl-CoA = N(6)-biotinyl-L-lysyl-[protein] + malonyl-CoA. It participates in lipid metabolism; malonyl-CoA biosynthesis; malonyl-CoA from acetyl-CoA: step 1/1. Component of the acetyl coenzyme A carboxylase (ACC) complex. First, biotin carboxylase catalyzes the carboxylation of biotin on its carrier protein (BCCP) and then the CO(2) group is transferred by the carboxyltransferase to acetyl-CoA to form malonyl-CoA. In Sphingopyxis alaskensis (strain DSM 13593 / LMG 18877 / RB2256) (Sphingomonas alaskensis), this protein is Acetyl-coenzyme A carboxylase carboxyl transferase subunit alpha.